The primary structure comprises 308 residues: Glutaminase 2 (308 aa).

Residues Ser66, Asn117, Glu161, Asn168, Tyr192, Tyr244, and Val262 each coordinate substrate.

It belongs to the glutaminase family. In terms of assembly, homotetramer.

It catalyses the reaction L-glutamine + H2O = L-glutamate + NH4(+). The protein is Glutaminase 2 of Shigella flexneri.